The chain runs to 344 residues: MIDRYSLLRPWLFCIDPEKAHNLTLSNLDRAQRWGFLERLITKPINDPQVLCGIEFSNPVGLAAGLDKDGKYIDALAALGFGFLEIGTVTPRPQPGNPKPRMFRLPEAQAIINRMGFNNDGVEACVARVRCSKFWQNGGVLGMNIGKNASTPIEEASRDYILAMEAVYEIATYITINISSPNTQNLRALQGEEMLRELLGSLGEARKHLCDRHGVRKPLFLKIAPNLDQGDINLIADLLLEFGIDAVIATNTTISRDAVKGMEFGEEAGGLSGAPVRNASNIVIKALKARLGNQLPIIGVGGIMSGVDAREKIMAGASLVQLYSGLIYRGPDLVYKCATVLRQP.

FMN is bound by residues 64 to 68 and T88; that span reads AGLDK. Residue K68 coordinates substrate. 113–117 lines the substrate pocket; it reads NRMGF. Positions 144 and 177 each coordinate FMN. N177 serves as a coordination point for substrate. S180 functions as the Nucleophile in the catalytic mechanism. N182 contacts substrate. 2 residues coordinate FMN: K222 and T250. 251-252 contacts substrate; it reads NT. FMN contacts are provided by residues G273, G302, and 323 to 324; that span reads YS.

It belongs to the dihydroorotate dehydrogenase family. Type 2 subfamily. In terms of assembly, monomer. The cofactor is FMN.

Its subcellular location is the cell membrane. It carries out the reaction (S)-dihydroorotate + a quinone = orotate + a quinol. It participates in pyrimidine metabolism; UMP biosynthesis via de novo pathway; orotate from (S)-dihydroorotate (quinone route): step 1/1. In terms of biological role, catalyzes the conversion of dihydroorotate to orotate with quinone as electron acceptor. This chain is Dihydroorotate dehydrogenase (quinone), found in Polynucleobacter necessarius subsp. necessarius (strain STIR1).